The primary structure comprises 156 residues: Zinc metalloproteinase-disintegrin jararin (156 aa).

In terms of domain architecture, Peptidase M12B spans 1 to 67 (FVANRMAHEL…NYYGCLLNEP (67 aa)). Histidine 8 serves as a coordination point for Zn(2+). Glutamate 9 is a catalytic residue. Histidine 12 provides a ligand contact to Zn(2+). 9 disulfides stabilise this stretch: cysteine 23-cysteine 47, cysteine 25-cysteine 30, cysteine 78-cysteine 97, cysteine 89-cysteine 107, cysteine 91-cysteine 102, cysteine 101-cysteine 124, cysteine 115-cysteine 121, cysteine 120-cysteine 145, and cysteine 133-cysteine 152. The 82-residue stretch at 75-156 (PPFCGNYYPE…GQSGDCPRNS (82 aa)) folds into the Disintegrin domain. The segment covering 136 to 145 (GRGDNPDDRC) has biased composition (basic and acidic residues). Positions 136–156 (GRGDNPDDRCTGQSGDCPRNS) are disordered. The Cell attachment site signature appears at 137-139 (RGD). Positions 146–156 (TGQSGDCPRNS) are enriched in polar residues.

This sequence belongs to the venom metalloproteinase (M12B) family. P-II subfamily. P-IIb sub-subfamily. In terms of assembly, monomer. Requires Zn(2+) as cofactor. As to expression, expressed by the venom gland.

The protein localises to the secreted. Snake venom zinc metalloproteinase that inhibits ADP-induced platelet aggregation (probably by binding integrin alpha-IIb/beta-3 (ITGA2B/ITGB3)) and degrades fibrinogen. This is Zinc metalloproteinase-disintegrin jararin from Bothrops jararaca (Jararaca).